We begin with the raw amino-acid sequence, 320 residues long: Chorion protein S36 (320 aa).

Positions 1-18 are cleaved as a signal peptide; that stretch reads MNCFLFTLFFVAAPLATA. Repeat copies occupy residues 178–181, 258–261, 266–269, 274–277, and alanine 290. Residues 259-320 form a disordered region; it reads APAQSYNAAP…YGSAPPASGY (62 aa).

It belongs to the chorion protein S36 family.

The protein resides in the secreted. In terms of biological role, chorion membrane (egg shell) protein; plays a role in protecting the egg from the environment. This chain is Chorion protein S36 (Cp36), found in Ceratitis capitata (Mediterranean fruit fly).